Here is a 278-residue protein sequence, read N- to C-terminus: HTH-type transcriptional regulator HdfR (278 aa).

The HTH lysR-type domain maps to 1–58; the sequence is MDTELLKTFLEVSRTRHFGRAAEALYLTQSAVSFRIRQLENQLGVNLFTRHRNNIRLT. Residues 18-37 constitute a DNA-binding region (H-T-H motif); the sequence is FGRAAEALYLTQSAVSFRIR.

It belongs to the LysR transcriptional regulatory family.

Its function is as follows. Negatively regulates the transcription of the flagellar master operon flhDC by binding to the upstream region of the operon. The sequence is that of HTH-type transcriptional regulator HdfR from Salmonella agona (strain SL483).